The chain runs to 348 residues: Noscapine synthase SDR1 (348 aa).

Belongs to the NAD(P)-dependent epimerase/dehydratase family.

The catalysed reaction is narcotine hemiacetal + NAD(+) = noscapine + NADH + H(+). Its pathway is alkaloid biosynthesis. Functionally, oxidoreductase that catalyzes the last step in the biosynthesis of the benzylisoquinoline alkaloid noscapine. Converts narcotine hemiacetal to noscapine. The chain is Noscapine synthase SDR1 from Papaver somniferum (Opium poppy).